The primary structure comprises 726 residues: A-type inclusion protein A25 homolog (726 aa).

The segment at 342–361 is disordered; it reads TNTGIEEPHATGGDKEDQPI. Over residues 347–360 the composition is skewed to basic and acidic residues; that stretch reads EEPHATGGDKEDQP. Tandem repeats lie at residues 612–634, 639–661, 667–689, and 691–713. Residues 612-713 are 4 X approximate tandem repeats; the sequence is RELEEERRRV…ERQLNDCRRN (102 aa).

It belongs to the poxviridae A25 protein family. In terms of assembly, interacts (via N-terminus) with protein A26.

The protein localises to the virion. In terms of biological role, structural protein that forms a matrix surrounding the mature virion (MV) through interaction with protein A26. Presence of protein A25 in the virion structurally prevents direct virus-cell fusion mechanism. The chain is A-type inclusion protein A25 homolog from Camelus.